Reading from the N-terminus, the 416-residue chain is MGLFGTKKIGKYEIGRTIGEGNFAKVKLGYDTTNGTYVAVKIIDKALVIQKGLESQVKREIRTMKLLNHPNIVQIHEVIGTKTKICIVMEYVSGGQLSDRLGRQKMKESDARKLFQQLIDAVDYCHNRGVYHRDLKPQNLLLDSKGNLKVSDFGLSAVPKSGDMLSTACGSPCYIAPELIMNKGYSGAAVDVWSCGVILFELLAGYPPFDDHTLPVLYKKILRADYTFPPGFTGEQKRLIFNILDPNPLSRITLAEIIIKDSWFKIGYTPVYHQLSDSIKDNVAEINAATASSNFINAFQIIAMSSDLDLSGLFEENDDKRYKTRIGSKNTAQETIKKIEAAATYVSLSVERIKHFKVKIQPKEIRSRSSYDLLSAEVIEVTPTNCVIEISKSAGELRLYMEFCQSLSSLLTAEVS.

The Protein kinase domain occupies 12-264 (YEIGRTIGEG…AEIIIKDSWF (253 aa)). ATP contacts are provided by residues 18–26 (IGEGNFAKV) and lysine 41. Catalysis depends on aspartate 134, which acts as the Proton acceptor. The activation loop stretch occupies residues 152–178 (DFGLSAVPKSGDMLSTACGSPCYIAPE). At serine 156 the chain carries Phosphoserine. Position 167 is a phosphothreonine (threonine 167). One can recognise an NAF domain in the interval 291-315 (ASSNFINAFQIIAMSSDLDLSGLFE). Residues 321–351 (RYKTRIGSKNTAQETIKKIEAAATYVSLSVE) form a PPI region.

The protein belongs to the protein kinase superfamily. CAMK Ser/Thr protein kinase family. SNF1 subfamily. Interacts with CBL9. Mn(2+) is required as a cofactor.

The catalysed reaction is L-seryl-[protein] + ATP = O-phospho-L-seryl-[protein] + ADP + H(+). It catalyses the reaction L-threonyl-[protein] + ATP = O-phospho-L-threonyl-[protein] + ADP + H(+). Functionally, CIPK serine-threonine protein kinases interact with CBL proteins. Binding of a CBL protein to the regulatory NAF domain of CIPK protein lead to the activation of the kinase in a calcium-dependent manner. This is CBL-interacting serine/threonine-protein kinase 21 (CIPK21) from Arabidopsis thaliana (Mouse-ear cress).